The sequence spans 89 residues: Large ribosomal subunit protein uL24 (89 aa).

Belongs to the universal ribosomal protein uL24 family. As to quaternary structure, part of the 50S ribosomal subunit.

Functionally, one of two assembly initiator proteins, it binds directly to the 5'-end of the 23S rRNA, where it nucleates assembly of the 50S subunit. Its function is as follows. One of the proteins that surrounds the polypeptide exit tunnel on the outside of the subunit. In Oenococcus oeni (strain ATCC BAA-331 / PSU-1), this protein is Large ribosomal subunit protein uL24.